We begin with the raw amino-acid sequence, 609 residues long: Glutamine--fructose-6-phosphate aminotransferase [isomerizing] (609 aa).

The active-site Nucleophile; for GATase activity is Cys2. Residues 2-217 form the Glutamine amidotransferase type-2 domain; it reads CGIVGAIAGR…DGDTAEIRRD (216 aa). SIS domains lie at 285 to 425 and 458 to 599; these read AESV…LRGA and WAEC…VDKP. Lys604 serves as the catalytic For Fru-6P isomerization activity.

As to quaternary structure, homodimer.

It is found in the cytoplasm. The enzyme catalyses D-fructose 6-phosphate + L-glutamine = D-glucosamine 6-phosphate + L-glutamate. In terms of biological role, catalyzes the first step in hexosamine metabolism, converting fructose-6P into glucosamine-6P using glutamine as a nitrogen source. The polypeptide is Glutamine--fructose-6-phosphate aminotransferase [isomerizing] (Xylella fastidiosa (strain 9a5c)).